The sequence spans 148 residues: 3-dehydroquinate dehydratase (148 aa).

The active-site Proton acceptor is the Y23. Substrate is bound by residues N75, H81, and D88. The active-site Proton donor is H101. Substrate-binding positions include 102 to 103 (LS) and R112.

This sequence belongs to the type-II 3-dehydroquinase family. Homododecamer.

It carries out the reaction 3-dehydroquinate = 3-dehydroshikimate + H2O. It participates in metabolic intermediate biosynthesis; chorismate biosynthesis; chorismate from D-erythrose 4-phosphate and phosphoenolpyruvate: step 3/7. Its function is as follows. Catalyzes a trans-dehydration via an enolate intermediate. The chain is 3-dehydroquinate dehydratase from Xanthomonas axonopodis pv. citri (strain 306).